The chain runs to 223 residues: Small ribosomal subunit protein uS3 (223 aa).

The region spanning 38–106 is the KH type-2 domain; the sequence is IRKFLDEKLK…QVHINIVEIK (69 aa).

It belongs to the universal ribosomal protein uS3 family. Part of the 30S ribosomal subunit. Forms a tight complex with proteins S10 and S14.

Functionally, binds the lower part of the 30S subunit head. Binds mRNA in the 70S ribosome, positioning it for translation. The polypeptide is Small ribosomal subunit protein uS3 (Lactobacillus delbrueckii subsp. bulgaricus (strain ATCC 11842 / DSM 20081 / BCRC 10696 / JCM 1002 / NBRC 13953 / NCIMB 11778 / NCTC 12712 / WDCM 00102 / Lb 14)).